The following is a 242-amino-acid chain: Leucyl/phenylalanyl-tRNA--protein transferase (242 aa).

This sequence belongs to the L/F-transferase family.

It localises to the cytoplasm. The enzyme catalyses N-terminal L-lysyl-[protein] + L-leucyl-tRNA(Leu) = N-terminal L-leucyl-L-lysyl-[protein] + tRNA(Leu) + H(+). It carries out the reaction N-terminal L-arginyl-[protein] + L-leucyl-tRNA(Leu) = N-terminal L-leucyl-L-arginyl-[protein] + tRNA(Leu) + H(+). It catalyses the reaction L-phenylalanyl-tRNA(Phe) + an N-terminal L-alpha-aminoacyl-[protein] = an N-terminal L-phenylalanyl-L-alpha-aminoacyl-[protein] + tRNA(Phe). Functionally, functions in the N-end rule pathway of protein degradation where it conjugates Leu, Phe and, less efficiently, Met from aminoacyl-tRNAs to the N-termini of proteins containing an N-terminal arginine or lysine. This chain is Leucyl/phenylalanyl-tRNA--protein transferase, found in Alcanivorax borkumensis (strain ATCC 700651 / DSM 11573 / NCIMB 13689 / SK2).